The sequence spans 404 residues: Triose phosphate/phosphate translocator, chloroplastic (404 aa).

The transit peptide at 1–74 (MESRVLSRTT…GPVCSRREKT (74 aa)) directs the protein to the chloroplast. Residues 75–98 (AVQPCRAASGSSGEAKTGFLEKYP) are Chloroplast intermembrane-facing. Residues 99–119 (ALVTGSFFFMWYFLNVIFNIL) form a helical membrane-spanning segment. Residues 120–131 (NKKIYNYFPYPY) are Lumenal-facing. The helical transmembrane segment at 132-152 (FVSVIHLFVGVVYCLASWSVG) threads the bilayer. At 153–209 (LPKRAPMDSKLLKLLIPVAVCHAIGHVTSNVSFAAVAVSFTHTIKALEPFFNAAASQ) the chain is on the chloroplast intermembrane side. A helical membrane pass occupies residues 210–230 (FVLGQSIPITLWLSLAPVVIG). Over 231 to 274 (VSMASLTELSFNWLGFISAMISNVSFTYRSLYSKKAMTDMDSTN) the chain is Lumenal. The chain crosses the membrane as a helical span at residues 275–294 (IYAYISIIALFVCLPPAIIV). The Chloroplast intermembrane portion of the chain corresponds to 295-372 (EGPQLMKHGF…IAFGNKISTQ (78 aa)). A helical transmembrane segment spans residues 373–393 (TAIGTSIAIAGVALYSLIKAK). At 394–404 (MEEEKRQMKST) the chain is on the lumenal side.

Belongs to the TPT transporter family. TPT (TC 2.A.7.9) subfamily. Post-translationally, the N-terminus is blocked.

It localises to the plastid. The protein localises to the chloroplast membrane. In terms of biological role, mediates the export of fixed carbons from the chloroplasts into the cytosol in the form of triose phosphates. This chain is Triose phosphate/phosphate translocator, chloroplastic, found in Spinacia oleracea (Spinach).